A 224-amino-acid chain; its full sequence is Phosphoribosylformylglycinamidine synthase subunit PurQ (224 aa).

Positions 4–224 (FGIIVFPGSN…ATDGLAMFIS (221 aa)) constitute a Glutamine amidotransferase type-1 domain. The active-site Nucleophile is the cysteine 87. Catalysis depends on residues histidine 204 and glutamate 206.

As to quaternary structure, part of the FGAM synthase complex composed of 1 PurL, 1 PurQ and 2 PurS subunits.

The protein resides in the cytoplasm. The catalysed reaction is N(2)-formyl-N(1)-(5-phospho-beta-D-ribosyl)glycinamide + L-glutamine + ATP + H2O = 2-formamido-N(1)-(5-O-phospho-beta-D-ribosyl)acetamidine + L-glutamate + ADP + phosphate + H(+). It catalyses the reaction L-glutamine + H2O = L-glutamate + NH4(+). It functions in the pathway purine metabolism; IMP biosynthesis via de novo pathway; 5-amino-1-(5-phospho-D-ribosyl)imidazole from N(2)-formyl-N(1)-(5-phospho-D-ribosyl)glycinamide: step 1/2. Part of the phosphoribosylformylglycinamidine synthase complex involved in the purines biosynthetic pathway. Catalyzes the ATP-dependent conversion of formylglycinamide ribonucleotide (FGAR) and glutamine to yield formylglycinamidine ribonucleotide (FGAM) and glutamate. The FGAM synthase complex is composed of three subunits. PurQ produces an ammonia molecule by converting glutamine to glutamate. PurL transfers the ammonia molecule to FGAR to form FGAM in an ATP-dependent manner. PurS interacts with PurQ and PurL and is thought to assist in the transfer of the ammonia molecule from PurQ to PurL. This chain is Phosphoribosylformylglycinamidine synthase subunit PurQ, found in Synechocystis sp. (strain ATCC 27184 / PCC 6803 / Kazusa).